The primary structure comprises 511 residues: Voltage-gated potassium channel KCNC1 (511 aa).

Over 1–190 (MGQGDESERI…EDPYSSRYAR (190 aa)) the chain is Cytoplasmic. S44 is modified (phosphoserine). Zn(2+) contacts are provided by H77, C83, C104, and C105. A disordered region spans residues 121–147 (SFGGAPLDNSADDADADGPGDSGDGED). A phosphoserine mark is found at S130, S142, S158, and S160. Residues 130-147 (SADDADADGPGDSGDGED) are compositionally biased toward acidic residues. A helical membrane pass occupies residues 191 to 209 (YVAFASLFFILVSITTFCL). N-linked (GlcNAc...) asparagine glycosylation is found at N220 and N229. A helical transmembrane segment spans residues 248–267 (IEGVCVVWFTFEFLMRVVFC). Residues 268–276 (PNKVEFIKN) lie on the Cytoplasmic side of the membrane. A helical membrane pass occupies residues 277–295 (SLNIIDFVAILPFYLEVGL). Residues 309–331 (FLRVVRFVRILRIFKLTRHFVGL) traverse the membrane as a helical; Voltage-sensor segment. At 332 to 344 (RVLGHTLRASTNE) the chain is on the cytoplasmic side. The helical transmembrane segment at 345–366 (FLLLIIFLALGVLIFATMIYYA) threads the bilayer. K(+) contacts are provided by T400, L401, G402, and Y403. The Selectivity filter motif lies at 400-405 (TLGYGD). Residues 415 to 436 (LVGALCALAGVLTIAMPVPVIV) traverse the membrane as a helical segment. Residues 437–511 (NNFGMYYSLA…GRKPLRGMSI (75 aa)) are Cytoplasmic-facing. The residue at position 474 (S474) is a Phosphoserine. A Phosphothreonine modification is found at T483.

This sequence belongs to the potassium channel family. C (Shaw) (TC 1.A.1.2) subfamily. Kv3.1/KCNC1 sub-subfamily. As to quaternary structure, homotetramer. Homomultimer. Heteromultimer with KCNG3, KCNG4 and KCNV2. Heteromultimer with KCNC2. Heterotetramer with KCNC3. Interacts with the ancillary subunits KCNE1 and KCNE2; the interaction modulates channel activity. N-glycosylated; contains sialylated glycans. Detected in cerebellum. Detected in brain (at protein level). Detected in brain.

Its subcellular location is the cell membrane. The protein localises to the cell projection. It is found in the axon. The protein resides in the presynaptic cell membrane. It carries out the reaction K(+)(in) = K(+)(out). In terms of biological role, voltage-gated potassium channel that opens in response to the voltage difference across the membrane and through which potassium ions pass in accordance with their electrochemical gradient. The mechanism is time-dependent and inactivation is slow. Plays an important role in the rapid repolarization of fast-firing brain neurons. Can form functional homotetrameric channels and heterotetrameric channels that contain variable proportions of KCNC2, and possibly other family members as well. Contributes to fire sustained trains of very brief action potentials at high frequency in pallidal neurons. The sequence is that of Voltage-gated potassium channel KCNC1 from Mus musculus (Mouse).